Here is a 474-residue protein sequence, read N- to C-terminus: Tubulin gamma-2 chain (474 aa).

142–148 lines the GTP pocket; sequence AGGTGSG.

It belongs to the tubulin family. In terms of assembly, gamma-tubulin complex is composed of gamma-tubulin and GCP proteins.

It is found in the cytoplasm. The protein resides in the cytoskeleton. It localises to the microtubule organizing center. Its subcellular location is the nucleus. The protein localises to the cell cortex. In terms of biological role, tubulin is the major constituent of microtubules. The gamma chain is found at microtubule organizing centers (MTOC) such as the spindle poles, suggesting that it is involved in the minus-end nucleation of microtubule assembly. Functionally, gamma-tubulin complex is essential for the control of microtubular network remodeling in the course of initiation and development of giant-feeding cells, and for the successful reproduction of nematodes (e.g. Meloidogyne spp.) in their plant hosts. The chain is Tubulin gamma-2 chain (TUBG2) from Arabidopsis thaliana (Mouse-ear cress).